Reading from the N-terminus, the 237-residue chain is Ribonuclease 3 (237 aa).

One can recognise an RNase III domain in the interval 3–133; the sequence is SRQPLLDALG…LLGAIYLQHG (131 aa). Position 43 (Glu43) interacts with Mg(2+). The active site involves Asp47. Asp119 and Glu122 together coordinate Mg(2+). Glu122 is an active-site residue. A DRBM domain is found at 160 to 228; the sequence is DWKTSLQELT…AAATWKALDV (69 aa).

This sequence belongs to the ribonuclease III family. As to quaternary structure, homodimer. It depends on Mg(2+) as a cofactor.

Its subcellular location is the cytoplasm. The catalysed reaction is Endonucleolytic cleavage to 5'-phosphomonoester.. In terms of biological role, digests double-stranded RNA. Involved in the processing of primary rRNA transcript to yield the immediate precursors to the large and small rRNAs (23S and 16S). Processes some mRNAs, and tRNAs when they are encoded in the rRNA operon. Processes pre-crRNA and tracrRNA of type II CRISPR loci if present in the organism. The polypeptide is Ribonuclease 3 (Mycolicibacterium paratuberculosis (strain ATCC BAA-968 / K-10) (Mycobacterium paratuberculosis)).